A 265-amino-acid chain; its full sequence is Small ribosomal subunit protein uS5 (265 aa).

The segment covering 1–25 has biased composition (low complexity); that stretch reads MADTTTAAQADQKPTRAFGAGRPQR. Positions 1-49 are disordered; that stretch reads MADTTTAAQADQKPTRAFGAGRPQRGAGGAPQRGGPRPQRGGQGETKSW. Ala2 carries the N-acetylalanine modification. The S5 DRBM domain maps to 89–152; sequence LKDEVMKIVP…VAAKLSVIPV (64 aa).

Belongs to the universal ribosomal protein uS5 family.

Its function is as follows. Component of the ribosome, a large ribonucleoprotein complex responsible for the synthesis of proteins in the cell. The small ribosomal subunit (SSU) binds messenger RNAs (mRNAs) and translates the encoded message by selecting cognate aminoacyl-transfer RNA (tRNA) molecules. The large subunit (LSU) contains the ribosomal catalytic site termed the peptidyl transferase center (PTC), which catalyzes the formation of peptide bonds, thereby polymerizing the amino acids delivered by tRNAs into a polypeptide chain. The nascent polypeptides leave the ribosome through a tunnel in the LSU and interact with protein factors that function in enzymatic processing, targeting, and the membrane insertion of nascent chains at the exit of the ribosomal tunnel. Plays a role in the assembly and function of the 40S ribosomal subunit. Mutations in this protein affects the control of translational fidelity. Involved in nucleolar processing of pre-18S ribosomal RNA and ribosome assembly. The chain is Small ribosomal subunit protein uS5 (rps2) from Dictyostelium discoideum (Social amoeba).